The sequence spans 404 residues: Ribosomal RNA large subunit methyltransferase F (404 aa).

Basic residues-rich tracts occupy residues methionine 1–arginine 10 and glutamine 18–lysine 29. 3 disordered regions span residues methionine 1–asparagine 54, glycine 156–lysine 177, and arginine 289–asparagine 308. Positions alanine 30 to asparagine 54 are enriched in basic and acidic residues. Polar residues predominate over residues threonine 157–proline 172.

The protein belongs to the methyltransferase superfamily. METTL16/RlmF family.

Its subcellular location is the cytoplasm. It catalyses the reaction adenosine(1618) in 23S rRNA + S-adenosyl-L-methionine = N(6)-methyladenosine(1618) in 23S rRNA + S-adenosyl-L-homocysteine + H(+). Functionally, specifically methylates the adenine in position 1618 of 23S rRNA. The polypeptide is Ribosomal RNA large subunit methyltransferase F (Shewanella sediminis (strain HAW-EB3)).